Consider the following 492-residue polypeptide: Glutamyl-tRNA(Gln) amidotransferase subunit A (492 aa).

Active-site charge relay system residues include lysine 79 and serine 154. The active-site Acyl-ester intermediate is serine 178.

This sequence belongs to the amidase family. GatA subfamily. In terms of assembly, heterotrimer of A, B and C subunits.

It carries out the reaction L-glutamyl-tRNA(Gln) + L-glutamine + ATP + H2O = L-glutaminyl-tRNA(Gln) + L-glutamate + ADP + phosphate + H(+). In terms of biological role, allows the formation of correctly charged Gln-tRNA(Gln) through the transamidation of misacylated Glu-tRNA(Gln) in organisms which lack glutaminyl-tRNA synthetase. The reaction takes place in the presence of glutamine and ATP through an activated gamma-phospho-Glu-tRNA(Gln). The chain is Glutamyl-tRNA(Gln) amidotransferase subunit A from Acinetobacter baumannii (strain ACICU).